The primary structure comprises 296 residues: GTPase Era (296 aa).

In terms of domain architecture, Era-type G spans 3-170 (KSGFVTIVGR…KELMFKYIPE (168 aa)). The tract at residues 11 to 18 (GRPNVGKS) is G1. 11–18 (GRPNVGKS) provides a ligand contact to GTP. Residues 37–41 (QTTRN) form a G2 region. The interval 58–61 (DTPG) is G3. Residues 58-62 (DTPGI) and 120-123 (NKID) each bind GTP. A G4 region spans residues 120–123 (NKID). Residues 149–151 (ISA) are G5. In terms of domain architecture, KH type-2 spans 201–278 (LSEEVPHGIA…YIRLWVKVKE (78 aa)).

Belongs to the TRAFAC class TrmE-Era-EngA-EngB-Septin-like GTPase superfamily. Era GTPase family. Monomer.

The protein resides in the cytoplasm. It localises to the cell membrane. In terms of biological role, an essential GTPase that binds both GDP and GTP, with rapid nucleotide exchange. Plays a role in 16S rRNA processing and 30S ribosomal subunit biogenesis and possibly also in cell cycle regulation and energy metabolism. The chain is GTPase Era from Clostridium botulinum (strain Kyoto / Type A2).